The sequence spans 315 residues: Methionyl-tRNA formyltransferase (315 aa).

A (6S)-5,6,7,8-tetrahydrofolate-binding site is contributed by 113–116 (SLLP).

Belongs to the Fmt family.

The catalysed reaction is L-methionyl-tRNA(fMet) + (6R)-10-formyltetrahydrofolate = N-formyl-L-methionyl-tRNA(fMet) + (6S)-5,6,7,8-tetrahydrofolate + H(+). Functionally, attaches a formyl group to the free amino group of methionyl-tRNA(fMet). The formyl group appears to play a dual role in the initiator identity of N-formylmethionyl-tRNA by promoting its recognition by IF2 and preventing the misappropriation of this tRNA by the elongation apparatus. This Enterobacter sp. (strain 638) protein is Methionyl-tRNA formyltransferase.